The chain runs to 321 residues: Glucokinase (321 aa).

Residue 8-13 (GDVGGT) participates in ATP binding.

This sequence belongs to the bacterial glucokinase family.

It localises to the cytoplasm. It carries out the reaction D-glucose + ATP = D-glucose 6-phosphate + ADP + H(+). In Salmonella heidelberg (strain SL476), this protein is Glucokinase.